The primary structure comprises 307 residues: ADP,ATP carrier protein 3 (307 aa).

Solcar repeat units lie at residues 10 to 103 (TNFA…IKLM), 114 to 206 (KWFA…LKPL), and 214 to 300 (GSFL…LQMI). 5 helical membrane passes run 12–39 (FAINFLMGGVSAAIAKTAASPIERVKIL), 80–104 (TANVIRYFPTQALNFAFKDKIKLMF), 112–132 (YGKWFAGNLASGGAAGALSLL), 182–203 (FMPSVVGIVVYRGLYFGMFDSL), and 217–237 (LASFLLGWVVTTGASTCSYPL). Positions 85 and 97 each coordinate ADP. R241 contributes to the ADP binding site. Residues 241-246 (RRRMMM) are important for transport activity. A Nucleotide carrier signature motif motif is present at residues 241 to 246 (RRRMMM). A helical membrane pass occupies residues 277–297 (CGANILRSVAGAGVISMYDQL).

This sequence belongs to the mitochondrial carrier (TC 2.A.29) family. In terms of assembly, monomer.

It is found in the mitochondrion inner membrane. It carries out the reaction ADP(in) + ATP(out) = ADP(out) + ATP(in). With respect to regulation, the matrix-open state (m-state) is inhibited by the membrane-permeable bongkrekic acid (BKA). The cytoplasmic-open state (c-state) is inhibited by the membrane-impermeable toxic inhibitor carboxyatractyloside (CATR). ADP:ATP antiporter that mediates import of ADP into the mitochondrial matrix for ATP synthesis, and export of ATP out to fuel the cell. Cycles between the cytoplasmic-open state (c-state) and the matrix-open state (m-state): operates by the alternating access mechanism with a single substrate-binding site intermittently exposed to either the cytosolic (c-state) or matrix (m-state) side of the inner mitochondrial membrane. The chain is ADP,ATP carrier protein 3 (AAC3) from Saccharomyces cerevisiae (strain ATCC 204508 / S288c) (Baker's yeast).